Here is a 102-residue protein sequence, read N- to C-terminus: Small ribosomal subunit protein uS10 (102 aa).

This sequence belongs to the universal ribosomal protein uS10 family. Part of the 30S ribosomal subunit.

Its function is as follows. Involved in the binding of tRNA to the ribosomes. The polypeptide is Small ribosomal subunit protein uS10 (Desulforamulus reducens (strain ATCC BAA-1160 / DSM 100696 / MI-1) (Desulfotomaculum reducens)).